The following is a 101-amino-acid chain: Small ribosomal subunit protein uS14 (101 aa).

The protein belongs to the universal ribosomal protein uS14 family. In terms of assembly, part of the 30S ribosomal subunit. Contacts proteins S3 and S10.

Its function is as follows. Binds 16S rRNA, required for the assembly of 30S particles and may also be responsible for determining the conformation of the 16S rRNA at the A site. The chain is Small ribosomal subunit protein uS14 from Nitrosomonas europaea (strain ATCC 19718 / CIP 103999 / KCTC 2705 / NBRC 14298).